An 810-amino-acid polypeptide reads, in one-letter code: Glycerol-3-phosphate acyltransferase (810 aa).

Residues cysteine 305–isoleucine 310 carry the HXXXXD motif motif.

This sequence belongs to the GPAT/DAPAT family.

It is found in the cell inner membrane. The enzyme catalyses sn-glycerol 3-phosphate + an acyl-CoA = a 1-acyl-sn-glycero-3-phosphate + CoA. The protein operates within phospholipid metabolism; CDP-diacylglycerol biosynthesis; CDP-diacylglycerol from sn-glycerol 3-phosphate: step 1/3. The polypeptide is Glycerol-3-phosphate acyltransferase (Haemophilus influenzae (strain PittEE)).